A 755-amino-acid polypeptide reads, in one-letter code: Polyribonucleotide nucleotidyltransferase (755 aa).

Mg(2+) contacts are provided by aspartate 493 and aspartate 499. The KH domain occupies 560 to 619 (PRIMTIQIPVDKIGALIGPGGKTIRNICDTTGAQIDIEDDGRVFITAPDGEAAKKAISMI). Positions 629-698 (GDIFLGKVVS…NTGKISLSRR (70 aa)) constitute an S1 motif domain. A disordered region spans residues 704–755 (ETPEARKAAGAAPRPRPREEQRGGREEPRSLREELRGPRRDGERPRPRRRDD). Residues 719-755 (RPREEQRGGREEPRSLREELRGPRRDGERPRPRRRDD) show a composition bias toward basic and acidic residues.

The protein belongs to the polyribonucleotide nucleotidyltransferase family. Mg(2+) serves as cofactor.

It localises to the cytoplasm. The catalysed reaction is RNA(n+1) + phosphate = RNA(n) + a ribonucleoside 5'-diphosphate. Functionally, involved in mRNA degradation. Catalyzes the phosphorolysis of single-stranded polyribonucleotides processively in the 3'- to 5'-direction. This Chloroflexus aggregans (strain MD-66 / DSM 9485) protein is Polyribonucleotide nucleotidyltransferase.